The sequence spans 328 residues: Malate dehydrogenase 2 (328 aa).

12 to 18 (GAAGQIA) is an NAD(+) binding site. The substrate site is built by Arg-93 and Arg-99. NAD(+) contacts are provided by residues Asn-106, Gln-113, and 130–132 (VGN). Substrate contacts are provided by Asn-132 and Arg-163. His-188 (proton acceptor) is an active-site residue.

This sequence belongs to the LDH/MDH superfamily. MDH type 2 family.

It catalyses the reaction (S)-malate + NAD(+) = oxaloacetate + NADH + H(+). Functionally, catalyzes the reversible oxidation of malate to oxaloacetate. The protein is Malate dehydrogenase 2 of Burkholderia vietnamiensis (strain G4 / LMG 22486) (Burkholderia cepacia (strain R1808)).